The following is a 122-amino-acid chain: Urease subunit beta (122 aa).

Residues 92–122 (GLRPEYAGELDGRGHEPTAPNYGEKGQGHFE) are disordered.

This sequence belongs to the urease beta subunit family. As to quaternary structure, heterotrimer of UreA (gamma), UreB (beta) and UreC (alpha) subunits. Three heterotrimers associate to form the active enzyme.

The protein localises to the cytoplasm. It catalyses the reaction urea + 2 H2O + H(+) = hydrogencarbonate + 2 NH4(+). It functions in the pathway nitrogen metabolism; urea degradation; CO(2) and NH(3) from urea (urease route): step 1/1. This is Urease subunit beta from Saccharopolyspora erythraea (strain ATCC 11635 / DSM 40517 / JCM 4748 / NBRC 13426 / NCIMB 8594 / NRRL 2338).